The following is a 199-amino-acid chain: Mediator of RNA polymerase II transcription subunit 29 (199 aa).

The span at 1-17 (MAAPQPQAAAVSSASGV) shows a compositional bias: low complexity. Residues 1–47 (MAAPQPQAAAVSSASGVSGPGSAGGPGPQQQPQPTQLVGSAQSGLLQ) form a disordered region. At Ala-2 the chain carries N-acetylalanine. Over residues 18–27 (SGPGSAGGPG) the composition is skewed to gly residues. The segment covering 28-47 (PQQQPQPTQLVGSAQSGLLQ) has biased composition (low complexity).

This sequence belongs to the Mediator complex subunit 29 family. As to quaternary structure, component of the Mediator complex, which is composed of MED1, MED4, MED6, MED7, MED8, MED9, MED10, MED11, MED12, MED13, MED13L, MED14, MED15, MED16, MED17, MED18, MED19, MED20, MED21, MED22, MED23, MED24, MED25, MED26, MED27, MED29, MED30, MED31, CCNC, CDK8 and CDC2L6/CDK11. The MED12, MED13, CCNC and CDK8 subunits form a distinct module termed the CDK8 module. Mediator containing the CDK8 module is less active than Mediator lacking this module in supporting transcriptional activation. Individual preparations of the Mediator complex lacking one or more distinct subunits have been variously termed ARC, CRSP, DRIP, PC2, SMCC and TRAP. Associates with the MED18/MED20 heteromer.

Its subcellular location is the nucleus. Component of the Mediator complex, a coactivator involved in the regulated transcription of nearly all RNA polymerase II-dependent genes. Mediator functions as a bridge to convey information from gene-specific regulatory proteins to the basal RNA polymerase II transcription machinery. Mediator is recruited to promoters by direct interactions with regulatory proteins and serves as a scaffold for the assembly of a functional preinitiation complex with RNA polymerase II and the general transcription factors. This Mus musculus (Mouse) protein is Mediator of RNA polymerase II transcription subunit 29 (Med29).